We begin with the raw amino-acid sequence, 272 residues long: Phosphatidylglycerol--prolipoprotein diacylglyceryl transferase (272 aa).

4 helical membrane passes run 24-44 (WYGI…KWIA), 59-79 (YFIW…ILFY), 102-122 (FIGI…IASF), and 129-149 (GVKF…GYVF). Arg151 contributes to the a 1,2-diacyl-sn-glycero-3-phospho-(1'-sn-glycerol) binding site. The next 3 membrane-spanning stretches (helical) occupy residues 180–200 (PSQL…LYAW), 208–228 (GQLG…AEFW), and 244–264 (MGQL…GYLA).

Belongs to the Lgt family.

Its subcellular location is the cell inner membrane. It catalyses the reaction L-cysteinyl-[prolipoprotein] + a 1,2-diacyl-sn-glycero-3-phospho-(1'-sn-glycerol) = an S-1,2-diacyl-sn-glyceryl-L-cysteinyl-[prolipoprotein] + sn-glycerol 1-phosphate + H(+). The protein operates within protein modification; lipoprotein biosynthesis (diacylglyceryl transfer). Functionally, catalyzes the transfer of the diacylglyceryl group from phosphatidylglycerol to the sulfhydryl group of the N-terminal cysteine of a prolipoprotein, the first step in the formation of mature lipoproteins. This is Phosphatidylglycerol--prolipoprotein diacylglyceryl transferase from Wolinella succinogenes (strain ATCC 29543 / DSM 1740 / CCUG 13145 / JCM 31913 / LMG 7466 / NCTC 11488 / FDC 602W) (Vibrio succinogenes).